The primary structure comprises 508 residues: Histidine ammonia-lyase (508 aa).

The 5-imidazolinone (Ala-Gly) cross-link spans 143 to 145; sequence ASG. S144 bears the 2,3-didehydroalanine (Ser) mark.

The protein belongs to the PAL/histidase family. Post-translationally, contains an active site 4-methylidene-imidazol-5-one (MIO), which is formed autocatalytically by cyclization and dehydration of residues Ala-Ser-Gly.

It localises to the cytoplasm. The enzyme catalyses L-histidine = trans-urocanate + NH4(+). It functions in the pathway amino-acid degradation; L-histidine degradation into L-glutamate; N-formimidoyl-L-glutamate from L-histidine: step 1/3. In Klebsiella pneumoniae subsp. pneumoniae (strain ATCC 700721 / MGH 78578), this protein is Histidine ammonia-lyase.